Here is a 218-residue protein sequence, read N- to C-terminus: Small ribosomal subunit protein uS3c (218 aa).

The 72-residue stretch at 47–118 (VQKNIRISSG…KLNIAITRIS (72 aa)) folds into the KH type-2 domain.

It belongs to the universal ribosomal protein uS3 family. In terms of assembly, part of the 30S ribosomal subunit.

The protein resides in the plastid. The protein localises to the chloroplast. The sequence is that of Small ribosomal subunit protein uS3c (rps3) from Lepidium virginicum (Virginia pepperweed).